The sequence spans 60 residues: Large ribosomal subunit protein uL30 (60 aa).

It belongs to the universal ribosomal protein uL30 family. Part of the 50S ribosomal subunit.

This chain is Large ribosomal subunit protein uL30, found in Ligilactobacillus salivarius (strain UCC118) (Lactobacillus salivarius).